The following is a 201-amino-acid chain: 3-isopropylmalate dehydratase small subunit (201 aa).

The protein belongs to the LeuD family. LeuD type 1 subfamily. In terms of assembly, heterodimer of LeuC and LeuD.

The catalysed reaction is (2R,3S)-3-isopropylmalate = (2S)-2-isopropylmalate. The protein operates within amino-acid biosynthesis; L-leucine biosynthesis; L-leucine from 3-methyl-2-oxobutanoate: step 2/4. Catalyzes the isomerization between 2-isopropylmalate and 3-isopropylmalate, via the formation of 2-isopropylmaleate. In Xanthobacter autotrophicus (strain ATCC BAA-1158 / Py2), this protein is 3-isopropylmalate dehydratase small subunit.